A 269-amino-acid polypeptide reads, in one-letter code: Protein-L-isoaspartate O-methyltransferase (269 aa).

Residues 1–53 are disordered; that stretch reads MSAGQRPAPKFPLRLDQVKPAGRSGAAPLLRPQRPLHQAATERGRGTTPAGLG. S113 is an active-site residue.

The protein belongs to the methyltransferase superfamily. L-isoaspartyl/D-aspartyl protein methyltransferase family.

The protein resides in the cytoplasm. It carries out the reaction [protein]-L-isoaspartate + S-adenosyl-L-methionine = [protein]-L-isoaspartate alpha-methyl ester + S-adenosyl-L-homocysteine. Its function is as follows. Catalyzes the methyl esterification of L-isoaspartyl residues in peptides and proteins that result from spontaneous decomposition of normal L-aspartyl and L-asparaginyl residues. It plays a role in the repair and/or degradation of damaged proteins. The polypeptide is Protein-L-isoaspartate O-methyltransferase (Methylibium petroleiphilum (strain ATCC BAA-1232 / LMG 22953 / PM1)).